Reading from the N-terminus, the 227-residue chain is Lipoprotein-releasing system ATP-binding protein LolD (227 aa).

In terms of domain architecture, ABC transporter spans L6–R227. A43–S50 lines the ATP pocket.

The protein belongs to the ABC transporter superfamily. Lipoprotein translocase (TC 3.A.1.125) family. The complex is composed of two ATP-binding proteins (LolD) and two transmembrane proteins (LolC and LolE).

Its subcellular location is the cell inner membrane. In terms of biological role, part of the ABC transporter complex LolCDE involved in the translocation of mature outer membrane-directed lipoproteins, from the inner membrane to the periplasmic chaperone, LolA. Responsible for the formation of the LolA-lipoprotein complex in an ATP-dependent manner. The polypeptide is Lipoprotein-releasing system ATP-binding protein LolD (Ruegeria sp. (strain TM1040) (Silicibacter sp.)).